Consider the following 217-residue polypeptide: Ras-related protein Rab-19 (217 aa).

Positions 26, 28, 29, 30, 31, 32, 42, 43, 44, 45, and 49 each coordinate GTP. Position 31 (T31) interacts with Mg(2+). Residues 39 to 54 carry the Switch 1 motif; the sequence is SGVYSESQQNTIGVDF. T49 and D72 together coordinate Mg(2+). Residues 74 to 89 carry the Switch 2 motif; that stretch reads AGQERFRTITQSYYRS. GTP contacts are provided by G75, N130, K131, D133, S161, A162, and K163. Residues C215 and C217 are each lipidated (S-geranylgeranyl cysteine). C217 carries the cysteine methyl ester modification.

It belongs to the small GTPase superfamily. Rab family. Requires Mg(2+) as cofactor.

The protein resides in the cell membrane. The enzyme catalyses GTP + H2O = GDP + phosphate + H(+). Its activity is regulated as follows. Regulated by guanine nucleotide exchange factors (GEFs) which promote the exchange of bound GDP for free GTP. Regulated by GTPase activating proteins (GAPs) which increase the GTP hydrolysis activity. Inhibited by GDP dissociation inhibitors (GDIs). In terms of biological role, the small GTPases Rab are key regulators of intracellular membrane trafficking, from the formation of transport vesicles to their fusion with membranes. Rabs cycle between an inactive GDP-bound form and an active GTP-bound form that is able to recruit to membranes different set of downstream effectors directly responsible for vesicle formation, movement, tethering and fusion. In Rattus norvegicus (Rat), this protein is Ras-related protein Rab-19.